The following is a 153-amino-acid chain: Large ribosomal subunit protein uL22 (153 aa).

It belongs to the universal ribosomal protein uL22 family. In terms of assembly, part of the 50S ribosomal subunit.

Its function is as follows. This protein binds specifically to 23S rRNA. It makes multiple contacts with different domains of the 23S rRNA in the assembled 50S subunit and ribosome. In terms of biological role, the globular domain of the protein is located near the polypeptide exit tunnel on the outside of the subunit, while an extended beta-hairpin is found that lines the wall of the exit tunnel in the center of the 70S ribosome. This chain is Large ribosomal subunit protein uL22, found in Methanococcus maripaludis (strain DSM 14266 / JCM 13030 / NBRC 101832 / S2 / LL).